The sequence spans 263 residues: Exosome complex component Rrp4 (263 aa).

The region spanning 51-127 is the S1 motif domain; it reads GKYIPSRKDF…KAMKVELSMR (77 aa). Residues 135–196 form the KH domain; that stretch reads SKGRIIEVVP…DRLTTAIEMI (62 aa). The interval 213 to 263 is disordered; it reads LRGEPEGTEGSDEEQLVDEEVAGVSLEDDDVTEETSRKVDVLLDNDTDETN. Residues 218 to 245 are compositionally biased toward acidic residues; that stretch reads EGTEGSDEEQLVDEEVAGVSLEDDDVTE.

It belongs to the RRP4 family. Component of the archaeal exosome complex. Forms a trimer of Rrp4 and/or Csl4 subunits. The trimer associates with a hexameric ring-like arrangement composed of 3 Rrp41-Rrp42 heterodimers.

The protein resides in the cytoplasm. Non-catalytic component of the exosome, which is a complex involved in RNA degradation. Increases the RNA binding and the efficiency of RNA degradation. Confers strong poly(A) specificity to the exosome. In Methanococcoides burtonii (strain DSM 6242 / NBRC 107633 / OCM 468 / ACE-M), this protein is Exosome complex component Rrp4.